Here is a 301-residue protein sequence, read N- to C-terminus: Probable alpha-L-glutamate ligase (301 aa).

The 184-residue stretch at 104–287 (LQLMSRKGLG…VASMIIKHIE (184 aa)) folds into the ATP-grasp domain. Residues Lys-141, 178 to 179 (EY), Asp-187, and 211 to 213 (RSN) each bind ATP. Residues Asp-248, Glu-260, and Asn-262 each contribute to the Mg(2+) site. Positions 248, 260, and 262 each coordinate Mn(2+).

The protein belongs to the RimK family. Mg(2+) serves as cofactor. Requires Mn(2+) as cofactor.

The protein is Probable alpha-L-glutamate ligase of Marinomonas sp. (strain MWYL1).